A 22-amino-acid polypeptide reads, in one-letter code: Short-chain-enoyl-CoA hydratase (22 aa).

Belongs to the enoyl-CoA hydratase/isomerase family.

The enzyme catalyses a short-chain (3S)-3-hydroxyacyl-CoA = a short-chain (2E)-enoyl-CoA + H2O. It participates in lipid metabolism; butanoate metabolism. The protein is Short-chain-enoyl-CoA hydratase (crt) of Clostridium pasteurianum.